The primary structure comprises 55 residues: Large ribosomal subunit protein bL33 (55 aa).

The protein belongs to the bacterial ribosomal protein bL33 family.

The sequence is that of Large ribosomal subunit protein bL33 from Caulobacter sp. (strain K31).